We begin with the raw amino-acid sequence, 300 residues long: Cholesterol 25-hydroxylase-like protein (300 aa).

The N-linked (GlcNAc...) asparagine glycan is linked to Asn9. 3 helical membrane passes run 54-73 (YTWVAVFTFIDVFLCNVPFF), 95-115 (LQGWNQLLWIYPMALVQLIWV), and 130-152 (MLSQLAIFFLAFDFTYFWFHYIN). Residues 135–266 (AIFFLAFDFT…WFNYLDRLMG (132 aa)) enclose the Fatty acid hydroxylase domain. The short motif at 148 to 152 (FHYIN) is the Histidine box-1 element. Positions 163–167 (HSVHH) match the Histidine box-2 motif. Residues 192 to 212 (ITTIPWIFPTHCLTYWIWFFI) form a helical membrane-spanning segment. The Histidine box-3 signature appears at 242 to 248 (AHDMHHL).

The protein belongs to the sterol desaturase family. Fe cation is required as a cofactor.

Its subcellular location is the membrane. In terms of biological role, probable sterol desaturase. The protein is Cholesterol 25-hydroxylase-like protein of Caenorhabditis elegans.